A 375-amino-acid polypeptide reads, in one-letter code: Queuine tRNA-ribosyltransferase (375 aa).

The active-site Proton acceptor is the Asp90. Substrate is bound by residues 90–94, Asp144, Gln190, and Gly217; that span reads DSGGF. Positions 248-254 are RNA binding; it reads GIGTPHY. Asp267 functions as the Nucleophile in the catalytic mechanism. The interval 272 to 276 is RNA binding; important for wobble base 34 recognition; it reads TRIAR. Positions 305, 307, 310, and 336 each coordinate Zn(2+).

It belongs to the queuine tRNA-ribosyltransferase family. As to quaternary structure, homodimer. Within each dimer, one monomer is responsible for RNA recognition and catalysis, while the other monomer binds to the replacement base PreQ1. It depends on Zn(2+) as a cofactor.

It carries out the reaction 7-aminomethyl-7-carbaguanine + guanosine(34) in tRNA = 7-aminomethyl-7-carbaguanosine(34) in tRNA + guanine. The protein operates within tRNA modification; tRNA-queuosine biosynthesis. Functionally, catalyzes the base-exchange of a guanine (G) residue with the queuine precursor 7-aminomethyl-7-deazaguanine (PreQ1) at position 34 (anticodon wobble position) in tRNAs with GU(N) anticodons (tRNA-Asp, -Asn, -His and -Tyr). Catalysis occurs through a double-displacement mechanism. The nucleophile active site attacks the C1' of nucleotide 34 to detach the guanine base from the RNA, forming a covalent enzyme-RNA intermediate. The proton acceptor active site deprotonates the incoming PreQ1, allowing a nucleophilic attack on the C1' of the ribose to form the product. After dissociation, two additional enzymatic reactions on the tRNA convert PreQ1 to queuine (Q), resulting in the hypermodified nucleoside queuosine (7-(((4,5-cis-dihydroxy-2-cyclopenten-1-yl)amino)methyl)-7-deazaguanosine). In Borrelia duttonii (strain Ly), this protein is Queuine tRNA-ribosyltransferase.